We begin with the raw amino-acid sequence, 560 residues long: MFS siderochrome iron transporter 1 (560 aa).

N-linked (GlcNAc...) asparagine glycosylation occurs at N29. A run of 11 helical transmembrane segments spans residues 53-73 (LWLT…LVSV), 90-110 (LLAS…LTLA), 115-135 (VWGR…ALIM), 146-166 (VAAH…VDVM), 177-194 (MIMF…TFAG), 211-231 (FGAF…IMLF), 264-284 (VVGI…FSIV), 291-311 (WATG…AIFL), 331-351 (PTII…LLTI), 354-374 (AGYV…GIGL), and 379-399 (FKWA…LLIP). An N-linked (GlcNAc...) asparagine glycan is attached at N404. 3 consecutive transmembrane segments (helical) span residues 407–427 (IGAV…FSVC), 441–461 (VAVV…VGLA), and 522–542 (VIAG…WRNV).

Belongs to the major facilitator superfamily.

It localises to the membrane. Its function is as follows. Major facilitator transporter involved in siderophore transport. This Ajellomyces capsulatus (Darling's disease fungus) protein is MFS siderochrome iron transporter 1.